The following is a 122-amino-acid chain: MFTKKNYKRVIYNIVGYLGEILIIWFLKCKGYYIIKHRYKCILGEIDIIACKNKYLAFIEVKTSIFGSEIPITNKQQRSIIKAAKSFITYHTKFEEYNIRFDLYFFSLSKGLIHIPHAWQEF.

This sequence belongs to the UPF0102 family.

This Ehrlichia chaffeensis (strain ATCC CRL-10679 / Arkansas) protein is UPF0102 protein ECH_0093.